We begin with the raw amino-acid sequence, 387 residues long: Protein RecA (387 aa).

78 to 85 (GPESSGKT) provides a ligand contact to ATP. The segment covering 350–369 (QTREVKSIERDPKETKETKS) has biased composition (basic and acidic residues). Positions 350-387 (QTREVKSIERDPKETKETKSKQPVSFSTEAEVDIAVGE) are disordered.

The protein belongs to the RecA family.

Its subcellular location is the cytoplasm. Functionally, can catalyze the hydrolysis of ATP in the presence of single-stranded DNA, the ATP-dependent uptake of single-stranded DNA by duplex DNA, and the ATP-dependent hybridization of homologous single-stranded DNAs. It interacts with LexA causing its activation and leading to its autocatalytic cleavage. The protein is Protein RecA of Leptospira meyeri.